The chain runs to 195 residues: HTH-type transcriptional regulator BetI (195 aa).

One can recognise an HTH tetR-type domain in the interval 8–68 (PIRRQQLIEA…ATMRYLISHL (61 aa)). Positions 31–50 (SIVQIARRAGVSNGIISHYF) form a DNA-binding region, H-T-H motif.

It participates in amine and polyamine biosynthesis; betaine biosynthesis via choline pathway [regulation]. Its function is as follows. Repressor involved in the biosynthesis of the osmoprotectant glycine betaine. It represses transcription of the choline transporter BetT and the genes of BetAB involved in the synthesis of glycine betaine. The protein is HTH-type transcriptional regulator BetI of Pectobacterium atrosepticum (strain SCRI 1043 / ATCC BAA-672) (Erwinia carotovora subsp. atroseptica).